We begin with the raw amino-acid sequence, 316 residues long: Aprataxin (316 aa).

The FHA-like domain occupies 1-38; it reads HASARGEGFLLLKADCNKGYVTVKQIGVNPTSVDLVDV. Positions 104 to 142 are disordered; the sequence is KKMEVVDTQSSSADLRPSKSSVSPHEGTTSRKEHLGHWS. Positions 110–130 are enriched in polar residues; that stretch reads DTQSSSADLRPSKSSVSPHEG. In terms of domain architecture, HIT spans 142–247; it reads SQGLKSSMQD…ISQDFDSPAL (106 aa). Interaction with DNA substrate stretches follow at residues 167–171 and 229–230; these read DKYPK and SM. A Histidine triad motif motif is present at residues 232 to 236; that stretch reads QLHLH. Residue histidine 234 is the Tele-AMP-histidine intermediate of the active site. Residues 291–313 form a C2H2-type zinc finger; that stretch reads LRCHLCKQQLSTIPQLKEHLKKH.

The protein localises to the nucleus. It is found in the nucleoplasm. It localises to the nucleolus. The enzyme catalyses a 5'-end adenosine-5'-diphospho-5'-2'-deoxyribonucleoside-DNA + H2O = a 5'-end 5'-phospho-2'-deoxyribonucleoside-DNA + AMP + 2 H(+). The catalysed reaction is a 5'-end adenosine-5'-diphospho-5'-ribonucleoside-2'-deoxyribonucleotide-DNA + H2O = a 5'-end 5'-phospho-ribonucleoside-2'-deoxyribonucleotide-DNA + AMP + 2 H(+). It carries out the reaction a 3'-end 2'-deoxyribonucleotide-3'-diphospho-5'-guanosine-DNA + H2O = a 3'-end 2'-deoxyribonucleotide 3'-phosphate-DNA + GMP + 2 H(+). DNA-binding protein involved in single-strand DNA break repair, double-strand DNA break repair and base excision repair. Resolves abortive DNA ligation intermediates formed either at base excision sites, or when DNA ligases attempt to repair non-ligatable breaks induced by reactive oxygen species. Catalyzes the release of adenylate groups covalently linked to 5'-phosphate termini, resulting in the production of 5'-phosphate termini that can be efficiently rejoined. Also able to hydrolyze adenosine 5'-monophosphoramidate (AMP-NH(2)) and diadenosine tetraphosphate (AppppA), but with lower catalytic activity. Likewise, catalyzes the release of 3'-linked guanosine (DNAppG) and inosine (DNAppI) from DNA, but has higher specific activity with 5'-linked adenosine (AppDNA). The sequence is that of Aprataxin (APTX) from Gallus gallus (Chicken).